Reading from the N-terminus, the 409-residue chain is Ribose-phosphate pyrophosphokinase 3, chloroplastic (409 aa).

Composition is skewed to low complexity over residues 1-16 (MATA…PAAA) and 34-43 (PASAFARPSP). Residues 1–43 (MATAASASASASPAAAFGAKTRRPGPSPSPSPSPASAFARPSP) form a disordered region. The N-terminal 44 residues, 1–44 (MATAASASASASPAAAFGAKTRRPGPSPSPSPSPASAFARPSPR), are a transit peptide targeting the chloroplast. Mg(2+)-binding residues include Asp-229 and His-231. Residues 312–327 (GRHVVIVDDLVQSGGT) form a binding of phosphoribosylpyrophosphate region.

This sequence belongs to the ribose-phosphate pyrophosphokinase family. The cofactor is Mg(2+).

It is found in the plastid. The protein localises to the chloroplast. It carries out the reaction D-ribose 5-phosphate + ATP = 5-phospho-alpha-D-ribose 1-diphosphate + AMP + H(+). This is Ribose-phosphate pyrophosphokinase 3, chloroplastic from Oryza sativa subsp. japonica (Rice).